The following is a 588-amino-acid chain: Proline--tRNA ligase (588 aa).

The protein belongs to the class-II aminoacyl-tRNA synthetase family. ProS type 1 subfamily. Homodimer.

Its subcellular location is the cytoplasm. The catalysed reaction is tRNA(Pro) + L-proline + ATP = L-prolyl-tRNA(Pro) + AMP + diphosphate. Its function is as follows. Catalyzes the attachment of proline to tRNA(Pro) in a two-step reaction: proline is first activated by ATP to form Pro-AMP and then transferred to the acceptor end of tRNA(Pro). As ProRS can inadvertently accommodate and process non-cognate amino acids such as alanine and cysteine, to avoid such errors it has two additional distinct editing activities against alanine. One activity is designated as 'pretransfer' editing and involves the tRNA(Pro)-independent hydrolysis of activated Ala-AMP. The other activity is designated 'posttransfer' editing and involves deacylation of mischarged Ala-tRNA(Pro). The misacylated Cys-tRNA(Pro) is not edited by ProRS. This Helicobacter hepaticus (strain ATCC 51449 / 3B1) protein is Proline--tRNA ligase.